The chain runs to 718 residues: Calpastatin (718 aa).

Disordered stretches follow at residues 1–189 (MNPA…MSST) and 210–238 (EKKT…LSSD). Positions 20–29 (PHSKKRHRRQ) are enriched in basic residues. Basic and acidic residues-rich tracts occupy residues 30-61 (DAKT…EHTK) and 68-104 (HASD…KPQD). Lysine 32 participates in a covalent cross-link: Glycyl lysine isopeptide (Lys-Gly) (interchain with G-Cter in SUMO2). Lysine 49 bears the N6-acetyllysine mark. Serine 86 bears the Phosphoserine mark. The segment covering 114-124 (AAGTTAAPGKA) has biased composition (low complexity). A phosphoserine mark is found at serine 133, serine 222, and serine 243. Residues 170-222 (TQEDSTAYTGPEISDPMSSTYIEELGKREVTIPPKYRELLEKKTGVAGPPPDS) form an Inhibitory domain 1 repeat. Disordered stretches follow at residues 266–291 (ESAK…AMSD) and 320–509 (EAKR…QLPA). Blocked amino end (Ser); in form erythrocyte is present on serine 290. The stretch at 307–359 (EPELDLSSIKEVAEAKRKEEKVEKCGEDDETVPAEYRLKPATDKDGKPLLPEP) is one Inhibitory domain 2 repeat. Basic and acidic residues-rich tracts occupy residues 320–331 (EAKRKEEKVEKC), 342–377 (YRLK…ELSK), and 384–399 (SNEK…EESK). Residues serine 367, serine 369, and serine 376 each carry the phosphoserine modification. Residues 400 to 411 (AAVPAPVAEAVP) are compositionally biased toward low complexity. Serine 444 carries the phosphoserine modification. Basic and acidic residues predominate over residues 446 to 496 (GRKEADPEEGKPVADKIKEKSKEEEREKLGEKEETIPPDYRLEEAKDKDGK). One copy of the Inhibitory domain 3 repeat lies at 450–503 (ADPEEGKPVADKIKEKSKEEEREKLGEKEETIPPDYRLEEAKDKDGKPLLPSEP). Phosphoserine is present on residues serine 520, serine 531, serine 579, and serine 581. The interval 543–718 (VSEVVSQSPA…KPKANEKNAS (176 aa)) is disordered. Over residues 566–579 (PSNKELDDALDKLS) the composition is skewed to basic and acidic residues. The Inhibitory domain 4 repeat unit spans residues 587–640 (PDPDENKPMEDKVKERAKKEHKDKLGERDDTIPPEYRHLLDQGEQDKPEKPPTK). Composition is skewed to basic and acidic residues over residues 587–650 (PDPD…KPAG) and 706–718 (ETSK…KNAS).

Belongs to the protease inhibitor I27 (calpastatin) family.

Its function is as follows. Specific inhibition of calpain (calcium-dependent cysteine protease). Plays a key role in postmortem tenderization of meat and have been proposed to be involved in muscle protein degradation in living tissue. This Oryctolagus cuniculus (Rabbit) protein is Calpastatin (CAST).